Here is a 953-residue protein sequence, read N- to C-terminus: MNNKKTATNRKGMIPNRLNKFSIRKYSVGTASILVGTTLIFGLSGHEAKAAEHTNGELNQSKNETTAPSENKTTEKVDSRQLKDNTQTATADQPKVTMSDSATVKETSSNMQSPQNATASQSTTQTSNVTTNDKSSTTYSNETDKSNLTQAKNVSTTPKTTTIKQRALNRMAVNTVAAPQQGTNVNDKVHFTNIDIAIDKGHVNKTTGNTEFWATSSDVLKLKANYTIDDSVKEGDTFTFKYGQYFRPGSVRLPSQTQNLYNAQGNIIAKGIYDSKTNTTTYTFTNYVDQYTNVSGSFEQVAFAKRENATTDKTAYKMEVTLGNDTYSKDVIVDYGNQKGQQLISSTNYINNEDLSRNMTVYVNQPKKTYTKETFVTNLTGYKFNPDAKNFKIYEVTDQNQFVDSFTPDTSKLKDVTGQFDVIYSNDNKTATVDLLNGQSSSDKQYIIQQVAYPDNSSTDNGKIDYTLETQNGKSSWSNSYSNVNGSSTANGDQKKYNLGDYVWEDTNKDGKQDANEKGIKGVYVILKDSNGKELDRTTTDENGKYQFTGLSNGTYSVEFSTPAGYTPTTANAGTDDAVDSDGLTTTGVIKDADNMTLDSGFYKTPKYSLGDYVWYDSNKDGKQDSTEKGIKGVKVTLQNEKGEVIGTTETDENGKYRFDNLDSGKYKVIFEKPAGLTQTGTNTTEDDKDADGGEVDVTITDHDDFTLDNGYYEEETSDSDSDSDSDSDSDSDSDSDSDSDSDSDSDSDSDSDSDSDSDSDSDSDSDSDSDSESDSDSDSDSDSDSDSDSDSDSDSDSDSDSDSDSDSDSDSDSDSDSDSDSDNDSDSDSDSDSDSDSDSDSDSDSDSDSDSDSDSDSDSDSDSDSDSDSDSDSDSDSDSDSDSDSDSDSDSDAGKHTPTKPMSTVKDQHKTAKALPETGSENNNSNNGTLFGGLFAALGSLLLFGRRKKQNK.

The signal sequence occupies residues 1–50 (MNNKKTATNRKGMIPNRLNKFSIRKYSVGTASILVGTTLIFGLSGHEAKA). The tract at residues 51–160 (AEHTNGELNQ…AKNVSTTPKT (110 aa)) is disordered. Residues 51–495 (AEHTNGELNQ…GSSTANGDQK (445 aa)) form a ligand binding A region region. Over residues 56-71 (GELNQSKNETTAPSEN) the composition is skewed to polar residues. Residues 72 to 83 (KTTEKVDSRQLK) are compositionally biased toward basic and acidic residues. Positions 84 to 114 (DNTQTATADQPKVTMSDSATVKETSSNMQSP) are enriched in polar residues. The segment covering 115-132 (QNATASQSTTQTSNVTTN) has biased composition (low complexity). Over residues 133–160 (DKSSTTYSNETDKSNLTQAKNVSTTPKT) the composition is skewed to polar residues. CNA-B domains are found at residues 496–606 (KYNL…YKTP) and 607–717 (KYSL…EEET). The segment at 678-933 (TQTGTNTTED…NNSNNGTLFG (256 aa)) is disordered. 2 stretches are compositionally biased toward acidic residues: residues 685-695 (TEDDKDADGGE) and 712-892 (YYEE…DSDS). An LPXTG sorting signal motif is present at residues 916–920 (LPETG). Positions 918-933 (ETGSENNNSNNGTLFG) are enriched in low complexity. Threonine 919 carries the post-translational modification Pentaglycyl murein peptidoglycan amidated threonine. The propeptide at 920-953 (GSENNNSNNGTLFGGLFAALGSLLLFGRRKKQNK) is removed by sortase.

It belongs to the serine-aspartate repeat-containing protein (SDr) family. Homodimerizes; via N2-Domain. Interacts with host NRXN1; this interaction mediates bacterial attachment to host cells.

The protein localises to the secreted. Its subcellular location is the cell wall. Cell surface-associated calcium-binding protein which plays an important role in adhesion and pathogenesis. Mediates interactions with components of the extracellular matrix such as host NRXN1 to promote bacterial adhesion. The polypeptide is Serine-aspartate repeat-containing protein C (sdrC) (Staphylococcus aureus (strain Mu50 / ATCC 700699)).